The sequence spans 282 residues: 4-hydroxy-tetrahydrodipicolinate reductase (282 aa).

Residue 12 to 17 (GVTGRM) participates in NAD(+) binding. NADP(+) is bound at residue Arg44. Residues 107-109 (GTT) and 131-134 (SSNF) contribute to the NAD(+) site. His164 (proton donor/acceptor) is an active-site residue. His165 lines the (S)-2,3,4,5-tetrahydrodipicolinate pocket. The active-site Proton donor is Lys168. A (S)-2,3,4,5-tetrahydrodipicolinate-binding site is contributed by 174-175 (GT).

Belongs to the DapB family. In terms of assembly, homotetramer.

Its subcellular location is the cytoplasm. The enzyme catalyses (S)-2,3,4,5-tetrahydrodipicolinate + NAD(+) + H2O = (2S,4S)-4-hydroxy-2,3,4,5-tetrahydrodipicolinate + NADH + H(+). It carries out the reaction (S)-2,3,4,5-tetrahydrodipicolinate + NADP(+) + H2O = (2S,4S)-4-hydroxy-2,3,4,5-tetrahydrodipicolinate + NADPH + H(+). The protein operates within amino-acid biosynthesis; L-lysine biosynthesis via DAP pathway; (S)-tetrahydrodipicolinate from L-aspartate: step 4/4. Functionally, catalyzes the conversion of 4-hydroxy-tetrahydrodipicolinate (HTPA) to tetrahydrodipicolinate. The chain is 4-hydroxy-tetrahydrodipicolinate reductase from Blochmanniella pennsylvanica (strain BPEN).